The primary structure comprises 195 residues: Capsid protein (195 aa).

Residues 148–195 are disordered; sequence NAPILSTLPETTVVRRRGRSPRRRTPSPRRRRSQSPRRRRSASPASQC. A compositionally biased stretch (basic residues) spans 161–188; sequence VRRRGRSPRRRTPSPRRRRSQSPRRRRS. Residues serine 167, serine 174, and serine 182 each carry the phosphoserine; by host modification. The 1; half-length repeat unit spans residues 167–172; that stretch reads SPRRRT. Residues 167-188 are 3 X 7 AA repeats of S-P-R-R-R-[PR]-S; the sequence is SPRRRTPSPRRRRSQSPRRRRS. The short motif at 170 to 187 is the Bipartite nuclear localization signal element; it reads RRTPSPRRRRSQSPRRRR. 2 tandem repeats follow at residues 174–180 and 182–188. Residues 189 to 195 form an RNA binding region; the sequence is ASPASQC.

This sequence belongs to the orthohepadnavirus core antigen family. As to quaternary structure, homodimerizes, then multimerizes. Interacts with cytosol exposed regions of viral L glycoprotein present in the reticulum-to-Golgi compartment. Interacts with human FLNB. Phosphorylated form interacts with host importin alpha; this interaction depends on the exposure of the NLS, which itself depends upon genome maturation and/or phosphorylation of the capsid protein. Interacts with host NUP153. Phosphorylated by host SRPK1, SRPK2, and maybe protein kinase C or GAPDH. Phosphorylation is critical for pregenomic RNA packaging. Protein kinase C phosphorylation is stimulated by HBx protein and may play a role in transport of the viral genome to the nucleus at the late step during the viral replication cycle.

Its subcellular location is the virion. It localises to the host cytoplasm. In terms of biological role, self assembles to form an icosahedral capsid. Most capsids appear to be large particles with an icosahedral symmetry of T=4 and consist of 240 copies of capsid protein, though a fraction forms smaller T=3 particles consisting of 180 capsid proteins. Entering capsids are transported along microtubules to the nucleus. Phosphorylation of the capsid is thought to induce exposure of nuclear localization signal in the C-terminal portion of the capsid protein that allows binding to the nuclear pore complex via the importin (karyopherin-) alpha and beta. Capsids are imported in intact form through the nuclear pore into the nuclear basket, where it probably binds NUP153. Only capsids that contain the mature viral genome can release the viral DNA and capsid protein into the nucleoplasm. Immature capsids get stuck in the basket. Capsids encapsulate the pre-genomic RNA and the P protein. Pre-genomic RNA is reverse-transcribed into DNA while the capsid is still in the cytoplasm. The capsid can then either be directed to the nucleus, providing more genomes for transcription, or bud through the endoplasmic reticulum to provide new virions. The polypeptide is Capsid protein (Hepatitis B virus genotype G (isolate IG29227/2000) (HBV-G)).